We begin with the raw amino-acid sequence, 370 residues long: Protein DVU_0535 (370 aa).

The Cytoplasmic segment spans residues 1–258; that stretch reads MDRRRFLTLL…EELGTKSAPE (258 aa). 3 4Fe-4S ferredoxin-type domains span residues 40–70, 101–132, and 133–162; these read YGVLHDTTRCIGCRKCEQACNEVNKLPAPKA, DHPVFRKQQCNHCLEPACASACFVKAFTKNPD, and GSVTYDGSLCVGCRYCMVACPFNVPAFQYA. Positions 49, 52, 55, 59, 110, 113, 118, 122, 142, 145, 148, 152, 172, 175, 187, and 191 each coordinate [4Fe-4S] cluster. The chain crosses the membrane as a helical span at residues 259–284; the sequence is YTAGALGAVPMVVGIWPILLTGAYAI. Residues 285–370 lie on the Periplasmic side of the membrane; it reads TKRKEKIAAE…DDAGKPGEDA (86 aa). Residues 345-355 show a composition bias toward basic and acidic residues; sequence FEEELAAKEQP. The interval 345–370 is disordered; it reads FEEELAAKEQPEAPEGDDAGKPGEDA.

It is found in the cell membrane. Functionally, HMWC (high-molecular-weight cytochrome c precursor), ORF2, ORF3, ORF4, ORF5, ORF6 in the HMC operon form a transmembrane protein complex that allows electron flow from the periplasmic hydrogenase to the cytoplasmic enzymes that catalyze reduction of sulfates. ORF2 is a transmembrane redox protein. The sequence is that of Protein DVU_0535 from Nitratidesulfovibrio vulgaris (strain ATCC 29579 / DSM 644 / CCUG 34227 / NCIMB 8303 / VKM B-1760 / Hildenborough) (Desulfovibrio vulgaris).